Here is a 336-residue protein sequence, read N- to C-terminus: DNA-directed RNA polymerase subunit alpha (336 aa).

The segment at Met1–Pro235 is alpha N-terminal domain (alpha-NTD). Residues Arg264 to Glu336 form an alpha C-terminal domain (alpha-CTD) region.

This sequence belongs to the RNA polymerase alpha chain family. Homodimer. The RNAP catalytic core consists of 2 alpha, 1 beta, 1 beta' and 1 omega subunit. When a sigma factor is associated with the core the holoenzyme is formed, which can initiate transcription.

The enzyme catalyses RNA(n) + a ribonucleoside 5'-triphosphate = RNA(n+1) + diphosphate. In terms of biological role, DNA-dependent RNA polymerase catalyzes the transcription of DNA into RNA using the four ribonucleoside triphosphates as substrates. The protein is DNA-directed RNA polymerase subunit alpha of Thermotoga maritima (strain ATCC 43589 / DSM 3109 / JCM 10099 / NBRC 100826 / MSB8).